Reading from the N-terminus, the 387-residue chain is S-adenosylmethionine synthase (387 aa).

Residue histidine 17 coordinates ATP. A Mg(2+)-binding site is contributed by aspartate 19. Glutamate 45 is a K(+) binding site. L-methionine is bound by residues glutamate 58 and glutamine 101. The tract at residues 101–111 (QSPDIAQGVDR) is flexible loop. ATP is bound by residues 168-170 (DAK), 234-235 (RF), aspartate 243, 249-250 (RK), alanine 266, and lysine 270. Residue aspartate 243 participates in L-methionine binding. Lysine 274 provides a ligand contact to L-methionine.

The protein belongs to the AdoMet synthase family. Homotetramer; dimer of dimers. The cofactor is Mg(2+). Requires K(+) as cofactor.

It is found in the cytoplasm. The catalysed reaction is L-methionine + ATP + H2O = S-adenosyl-L-methionine + phosphate + diphosphate. The protein operates within amino-acid biosynthesis; S-adenosyl-L-methionine biosynthesis; S-adenosyl-L-methionine from L-methionine: step 1/1. In terms of biological role, catalyzes the formation of S-adenosylmethionine (AdoMet) from methionine and ATP. The overall synthetic reaction is composed of two sequential steps, AdoMet formation and the subsequent tripolyphosphate hydrolysis which occurs prior to release of AdoMet from the enzyme. This Bordetella petrii (strain ATCC BAA-461 / DSM 12804 / CCUG 43448) protein is S-adenosylmethionine synthase.